The sequence spans 359 residues: Aspartate carbamoyltransferase catalytic subunit (359 aa).

Arg52 and Thr53 together coordinate carbamoyl phosphate. Lys81 serves as a coordination point for L-aspartate. Residues Arg102, His130, and Gln133 each coordinate carbamoyl phosphate. L-aspartate contacts are provided by Arg163 and Arg224. 2 residues coordinate carbamoyl phosphate: Leu264 and Pro265.

This sequence belongs to the aspartate/ornithine carbamoyltransferase superfamily. ATCase family. In terms of assembly, heterododecamer (2C3:3R2) of six catalytic PyrB chains organized as two trimers (C3), and six regulatory PyrI chains organized as three dimers (R2).

It carries out the reaction carbamoyl phosphate + L-aspartate = N-carbamoyl-L-aspartate + phosphate + H(+). It functions in the pathway pyrimidine metabolism; UMP biosynthesis via de novo pathway; (S)-dihydroorotate from bicarbonate: step 2/3. In terms of biological role, catalyzes the condensation of carbamoyl phosphate and aspartate to form carbamoyl aspartate and inorganic phosphate, the committed step in the de novo pyrimidine nucleotide biosynthesis pathway. This chain is Aspartate carbamoyltransferase catalytic subunit, found in Brachyspira hyodysenteriae (strain ATCC 49526 / WA1).